Reading from the N-terminus, the 155-residue chain is Large ribosomal subunit protein uL30 (155 aa).

This sequence belongs to the universal ribosomal protein uL30 family. Part of the 50S ribosomal subunit.

The sequence is that of Large ribosomal subunit protein uL30 from Cenarchaeum symbiosum (strain A).